Consider the following 567-residue polypeptide: Beta-galactoside-specific lectin 2 (567 aa).

The first 33 residues, 1–33 (MNARLASSRAWVWCFLMVGLVCGATAKAESKIN), serve as a signal peptide directing secretion. A glycan (N-linked (GlcNAc...) asparagine) is linked at Asn-145. Glu-198 is an active-site residue. Cystine bridges form between Cys-280–Cys-306 and Cys-322–Cys-341. Residues 288 to 301 (DVHNWPLVIRPVMV) constitute a propeptide, connecting peptide. One can recognise a Ricin B-type lectin 1 domain in the interval 309–439 (SEPTVRIVGR…DSLGQSWLAS (131 aa)). 324-326 (DVR) is a D-galactose binding site. N-linked (GlcNAc...) asparagine glycosylation occurs at Asn-362. Cys-365 and Cys-382 form a disulfide bridge. N-linked (GlcNAc...) asparagine glycosylation occurs at Asn-440. The Ricin B-type lectin 2 domain occupies 443-566 (APREVTIYGF…GNPNQMWLPV (124 aa)). 2 disulfide bridges follow: Cys-456–Cys-469 and Cys-495–Cys-512. A D-galactose-binding site is contributed by 539 to 541 (DVR).

This sequence belongs to the ribosome-inactivating protein family. Type 2 RIP subfamily. Disulfide-linked dimer of A and B chains.

It catalyses the reaction Endohydrolysis of the N-glycosidic bond at one specific adenosine on the 28S rRNA.. The A chain is responsible for inhibiting protein synthesis through the catalytic inactivation of 60S ribosomal subunits by removing adenine from position 4,324 of 28S rRNA. The B chain binds to cell receptors and probably facilitates the entry into the cell of the A chain; B chains are also responsible for cell agglutination (lectin activity). The chain is Beta-galactoside-specific lectin 2 from Viscum album (European mistletoe).